Here is a 459-residue protein sequence, read N- to C-terminus: Trichothecene 3-O-acetyltransferase TRI101 (459 aa).

Residues Asp218 and Ile221 each contribute to the Ca(2+) site. Residues Lys253, 266–269 (FVST), Asp302, Gln318, and Arg343 each bind CoA. Residue Asp376 participates in Ca(2+) binding. CoA-binding residues include Ser386 and Lys390. Residue Glu449 coordinates Ca(2+).

The protein belongs to the trichothecene 3-O-acetyltransferase family.

It participates in sesquiterpene biosynthesis; trichothecene biosynthesis. 3-O-acetyltransferase involved in the biosynthesis of trichothecenes, a very large family of chemically related bicyclic sesquiterpene compounds acting as mycotoxins, including T2-toxin. The biosynthesis of trichothecenes begins with the cyclization of farnesyl diphosphate to trichodiene and is catalyzed by the trichodiene synthase TRI5. Trichodiene undergoes a series of oxygenations catalyzed by the cytochrome P450 monooxygenase TRI4. TRI4 controls the addition of four oxygens at C-2, C-3, C-11, and the C-12, C-13-epoxide to form the intermediate isotrichotriol. Isotrichotriol then undergoes a non-enzymatic isomerization and cyclization to form isotrichodermol. During this process, the oxygen at the C-2 position becomes the pyran ring oxygen and the hydroxyl group at C-11 is lost. More complex type A trichothecenes are built by modifying isotrichodermol through a series of paired hydroxylation and acetylation or acylation steps. Isotrichodermol is converted to isotrichodermin by the acetyltransferase TRI101. TRI101 encodes a C-3 transacetylase that acts as a self-protection or resistance factor during biosynthesis and that the presence of a free C-3 hydroxyl group is a key component of Fusarium trichothecene phytotoxicity. A second hydroxyl group is added to C-15 by the trichothecene C-15 hydroxylase TRI11, producing 15-decalonectrin, which is then acetylated by TRI3, producing calonectrin. A third hydroxyl group is added at C-4 by the cytochrome P450 monooxygenase TRI13, converting calonectrin to 3,15-diacetoxyspirpenol, which is subsequently acetylated bythe acetyltransferase TRI7. A fourth hydroxyl group is added to C-8 by the cytochrome P450 monooxygenase TRI1, followed by the addition of an isovaleryl moiety by TRI16. Finally, the acetyl group is removed from the C-3 position by the trichothecene C-3 esterase TRI8 to produce T-2 toxin. This Fusarium sporotrichioides protein is Trichothecene 3-O-acetyltransferase TRI101.